Here is a 65-residue protein sequence, read N- to C-terminus: Large ribosomal subunit protein bL35 (65 aa).

This sequence belongs to the bacterial ribosomal protein bL35 family.

This is Large ribosomal subunit protein bL35 from Baumannia cicadellinicola subsp. Homalodisca coagulata.